We begin with the raw amino-acid sequence, 144 residues long: Maximins 3/H11 type 1 (144 aa).

An N-terminal signal peptide occupies residues 1–18; that stretch reads MNFKYIVAVSFLIASAYA. 2 propeptides span residues 19–43 and 73–122; these read RSVQ…REIR and RTAE…KKEK. Residue Ile-143 is modified to Isoleucine amide.

It belongs to the bombinin family. In terms of tissue distribution, expressed by the skin glands.

The protein resides in the secreted. In terms of biological role, maximin-3 shows antibacterial activity against both Gram-positive and Gram-negative bacteria. It also shows antimicrobial activity against the fungus C.albicans, but not against A.flavus nor P.uticale. It has little hemolytic activity. It possess a significant cytotoxicity against tumor cell lines. It possess a significant anti-HIV activity. It shows high spermicidal activity. Maximin-H11 shows antimicrobial activity against bacteria and against the fungus C.albicans. Shows strong hemolytic activity. This chain is Maximins 3/H11 type 1, found in Bombina maxima (Giant fire-bellied toad).